The chain runs to 291 residues: Bis(5'-nucleosyl)-tetraphosphatase, symmetrical (291 aa).

This sequence belongs to the Ap4A hydrolase family.

It catalyses the reaction P(1),P(4)-bis(5'-adenosyl) tetraphosphate + H2O = 2 ADP + 2 H(+). Functionally, hydrolyzes diadenosine 5',5'''-P1,P4-tetraphosphate to yield ADP. The protein is Bis(5'-nucleosyl)-tetraphosphatase, symmetrical of Coxiella burnetii (strain RSA 331 / Henzerling II).